Consider the following 443-residue polypeptide: tRNA-2-methylthio-N(6)-dimethylallyladenosine synthase (443 aa).

In terms of domain architecture, MTTase N-terminal spans 12–126 (KTFRVKSFGC…LPEMVADAAA (115 aa)). [4Fe-4S] cluster-binding residues include Cys21, Cys57, Cys89, Cys162, Cys166, and Cys169. The Radical SAM core domain occupies 148 to 380 (RKSAPTAFLT…QAALNRDQLA (233 aa)). The TRAM domain occupies 383 to 443 (KASVGKTCEV…GPNSISGRLA (61 aa)).

The protein belongs to the methylthiotransferase family. MiaB subfamily. As to quaternary structure, monomer. Requires [4Fe-4S] cluster as cofactor.

The protein resides in the cytoplasm. It catalyses the reaction N(6)-dimethylallyladenosine(37) in tRNA + (sulfur carrier)-SH + AH2 + 2 S-adenosyl-L-methionine = 2-methylsulfanyl-N(6)-dimethylallyladenosine(37) in tRNA + (sulfur carrier)-H + 5'-deoxyadenosine + L-methionine + A + S-adenosyl-L-homocysteine + 2 H(+). Its function is as follows. Catalyzes the methylthiolation of N6-(dimethylallyl)adenosine (i(6)A), leading to the formation of 2-methylthio-N6-(dimethylallyl)adenosine (ms(2)i(6)A) at position 37 in tRNAs that read codons beginning with uridine. The chain is tRNA-2-methylthio-N(6)-dimethylallyladenosine synthase from Novosphingobium aromaticivorans (strain ATCC 700278 / DSM 12444 / CCUG 56034 / CIP 105152 / NBRC 16084 / F199).